The sequence spans 396 residues: RNA binding protein fox-1 homolog 1 (396 aa).

Residues M1 to H119 are disordered. The segment covering P67–G86 has biased composition (polar residues). Positions T87–D98 are enriched in low complexity. Residues G99 to K112 are compositionally biased toward polar residues. In terms of domain architecture, RRM spans K116–A192. Asymmetric dimethylarginine is present on residues R316 and A337. Position 387 is an omega-N-methylarginine (R387).

As to quaternary structure, binds to the C-terminus of ATXN2. In terms of tissue distribution, detected in brain (at protein level). Detected in heart, brain, neurons, skeletal muscle and embryo.

It localises to the nucleus. The protein resides in the cytoplasm. RNA-binding protein that regulates alternative splicing events by binding to 5'-UGCAUGU-3' elements. Prevents binding of U2AF2 to the 3'-splice site. Regulates alternative splicing of tissue-specific exons and of differentially spliced exons during erythropoiesis. The chain is RNA binding protein fox-1 homolog 1 (Rbfox1) from Mus musculus (Mouse).